Consider the following 401-residue polypeptide: Beta-ketoadipyl-CoA thiolase (401 aa).

Cysteine 90 (acyl-thioester intermediate) is an active-site residue. Residues histidine 357 and cysteine 387 each act as proton acceptor in the active site.

Belongs to the thiolase-like superfamily. Thiolase family.

It carries out the reaction succinyl-CoA + acetyl-CoA = 3-oxoadipyl-CoA + CoA. It participates in aromatic compound metabolism; beta-ketoadipate pathway; acetyl-CoA and succinyl-CoA from 3-oxoadipate: step 2/2. Its function is as follows. Catalyzes thiolytic cleavage of beta-ketoadipyl-CoA to succinyl-CoA and acetyl-CoA. This Acinetobacter baylyi (strain ATCC 33305 / BD413 / ADP1) protein is Beta-ketoadipyl-CoA thiolase (pcaF).